A 292-amino-acid polypeptide reads, in one-letter code: ABC transporter ATP-binding protein YtrB (292 aa).

An ABC transporter domain is found at 2–227 (IELRQLSKAI…YIKIQMAFDT (226 aa)). Position 34–41 (34–41 (GRNGSGKT)) interacts with ATP.

The protein belongs to the ABC transporter superfamily. As to quaternary structure, the complex is composed of 2 ATP-binding proteins (YtrB and YtrE), 2 transmembrane proteins (YtrC and YtrD) and a solute-binding protein (YtrF).

The protein resides in the cell membrane. In terms of biological role, part of the ABC transporter complex YtrBCDEF that plays a role in acetoin utilization during stationary phase and sporulation. In Bacillus subtilis (strain 168), this protein is ABC transporter ATP-binding protein YtrB (ytrB).